Consider the following 1049-residue polypeptide: Cilia- and flagella-associated protein 337 (1049 aa).

The 36-residue stretch at 81 to 116 folds into the EF-hand domain; the sequence is GTKEEYGELFDKVDVAQDGFINWDKLTSFILLELYE. WD repeat units lie at residues 138-177, 358-397, 401-440, 487-528, 531-570, and 633-671; these read KHKD…QETF, NIAQ…KPVG, GHSA…SIQR, SHEK…KQFT, HGNA…HHTL, and QHHD…AHHV. Residues 691–712 form a disordered region; sequence LLSAGRSQPSHPMADHSTTGVR. The segment covering 695 to 711 has biased composition (polar residues); sequence GRSQPSHPMADHSTTGV. 3 WD repeats span residues 719-766, 769-809, and 825-866; these read EGKN…LLAE, AHSG…LNSS, and PHED…VWIF.

It belongs to the CFAP337 family. In terms of assembly, associates with components of the nexin-dynein regulatory complex (N-DRC) and the CFAP184:CFAP263 complex.

It localises to the cell projection. It is found in the cilium. Its function is as follows. Associates with components of the nexin-dynein regulatory complex (N-DRC), a key regulator of ciliary/flagellar motility, and might act as an inner dynein arm (IDA) hub or linkage. The sequence is that of Cilia- and flagella-associated protein 337 from Homo sapiens (Human).